The primary structure comprises 383 residues: Probable indole-3-pyruvate monooxygenase YUCCA10 (383 aa).

Residue 9 to 14 coordinates FAD; that stretch reads GAGPAG. 177-182 serves as a coordination point for NADP(+); the sequence is GGGNSG.

It belongs to the FMO family. Requires FAD as cofactor.

The enzyme catalyses indole-3-pyruvate + NADPH + O2 + H(+) = (indol-3-yl)acetate + CO2 + NADP(+) + H2O. Its pathway is plant hormone metabolism; auxin biosynthesis. Its function is as follows. Involved in auxin biosynthesis. This is Probable indole-3-pyruvate monooxygenase YUCCA10 (YUC10) from Arabidopsis thaliana (Mouse-ear cress).